The primary structure comprises 567 residues: Oxygen-dependent choline dehydrogenase (567 aa).

6-35 (DYIIVGAGSAGNTLATRLTEDEGVTVLLLE) contacts FAD. The segment at 182–203 (QQEGFGPMDRTVTPKGRRASTA) is disordered. Histidine 475 (proton acceptor) is an active-site residue.

The protein belongs to the GMC oxidoreductase family. FAD serves as cofactor.

It carries out the reaction choline + A = betaine aldehyde + AH2. It catalyses the reaction betaine aldehyde + NAD(+) + H2O = glycine betaine + NADH + 2 H(+). It functions in the pathway amine and polyamine biosynthesis; betaine biosynthesis via choline pathway; betaine aldehyde from choline (cytochrome c reductase route): step 1/1. Functionally, involved in the biosynthesis of the osmoprotectant glycine betaine. Catalyzes the oxidation of choline to betaine aldehyde and betaine aldehyde to glycine betaine at the same rate. The polypeptide is Oxygen-dependent choline dehydrogenase (Pseudomonas fluorescens (strain ATCC BAA-477 / NRRL B-23932 / Pf-5)).